Here is a 468-residue protein sequence, read N- to C-terminus: Fibrinogen beta chain (468 aa).

Gln-1 is modified (pyrrolidone carboxylic acid). The segment covering 1-10 has biased composition (acidic residues); the sequence is QFPTDYDEGQ. The disordered stretch occupies residues 1–54; the sequence is QFPTDYDEGQDDRPKVGLGARGHRPYDKKKEEAPSLRPVPPPISGGGYRARPAT. The O-linked (GalNAc...) threonine glycan is linked to Thr-4. Tyr-6 bears the Sulfotyrosine mark. Residues 24 to 34 are compositionally biased toward basic and acidic residues; the sequence is RPYDKKKEEAP. The stretch at 88 to 204 forms a coiled coil; sequence KLQDTLVRQE…TQMEYCRTPC (117 aa). 2 disulfides stabilise this stretch: Cys-208–Cys-293 and Cys-218–Cys-247. The Fibrinogen C-terminal domain maps to 209–465; that stretch reads NIPVVSGKEC…KMSMKIRPYF (257 aa). Asn-371 is a glycosylation site (N-linked (GlcNAc...) asparagine). The cysteines at positions 401 and 414 are disulfide-linked.

In terms of assembly, heterohexamer; disulfide linked. Contains 2 sets of 3 non-identical chains (alpha, beta and gamma). The 2 heterotrimers are in head to head conformation with the N-termini in a small central domain. In terms of processing, conversion of fibrinogen to fibrin is triggered by thrombin, which cleaves fibrinopeptides A and B from alpha and beta chains, and thus exposes the N-terminal polymerization sites responsible for the formation of the soft clot. The soft clot is converted into the hard clot by factor XIIIA which catalyzes the epsilon-(gamma-glutamyl)lysine cross-linking between gamma chains (stronger) and between alpha chains (weaker) of different monomers. As to expression, detected in blood plasma (at protein level).

The protein resides in the secreted. Its function is as follows. Cleaved by the protease thrombin to yield monomers which, together with fibrinogen alpha (FGA) and fibrinogen gamma (FGG), polymerize to form an insoluble fibrin matrix. Fibrin has a major function in hemostasis as one of the primary components of blood clots. In addition, functions during the early stages of wound repair to stabilize the lesion and guide cell migration during re-epithelialization. Was originally thought to be essential for platelet aggregation, based on in vitro studies using anticoagulated blood. However subsequent studies have shown that it is not absolutely required for thrombus formation in vivo. Enhances expression of SELP in activated platelets. Maternal fibrinogen is essential for successful pregnancy. Fibrin deposition is also associated with infection, where it protects against IFNG-mediated hemorrhage. May also facilitate the antibacterial immune response via both innate and T-cell mediated pathways. The chain is Fibrinogen beta chain (FGB) from Bos taurus (Bovine).